The chain runs to 355 residues: SH3 domain-containing protein Dlish (355 aa).

3 consecutive SH3 domains span residues 57-117 (SPDS…PCNT), 183-243 (EPSG…PADS), and 287-352 (YHGT…PPAM).

Interacts with dachs (via C-terminus); the interaction is direct. Interacts (via N-terminus including SH3 domain 1) with palmitoyltransferase app; this leads to palmitoylation of Dlish by app. Also interacts with dco, ft, ft-regulated E3 ubiquitin ligase Fbxl7, F-box protein slmb and SCF E3 ubiquitin-protein ligase complex component Cul1. In terms of processing, palmitoylated by app.

The protein localises to the cytoplasm. The protein resides in the cell cortex. In terms of biological role, required for the apical cell cortex localization, total cellular level and full activity of dachs. The polypeptide is SH3 domain-containing protein Dlish (Drosophila melanogaster (Fruit fly)).